Here is a 408-residue protein sequence, read N- to C-terminus: Putative gustatory receptor 98c (408 aa).

Residues 1-42 (MEMEAKRSRLLTTARPYLQVLSLFGLTPPAEFFTRTLRKRRR) lie on the Cytoplasmic side of the membrane. Residues 43–63 (FCWMAGYSLYLIAILLMVFYE) form a helical membrane-spanning segment. Topologically, residues 64-92 (FHANIVSLHLEIYKFHVEDFSKVMGRTQK) are extracellular. Residues 93 to 113 (FLIVAIATCNQLNILLNYGRL) traverse the membrane as a helical segment. Residues 114-146 (GLIYDEIANLDLGIDKSSKNFCGKSHWWSFRLR) are Cytoplasmic-facing. A helical membrane pass occupies residues 147–167 (LTLSIGLWMVIIIGVIPRLTL). At 168–183 (GRAGPFFHWVNQVLTQ) the chain is on the extracellular side. A helical transmembrane segment spans residues 184–204 (IILIMLQLKGPEYCLFVLLVY). Topologically, residues 205–261 (ELILRTRHVLEQLKDDLEDFDCGARIQELCVTLKQNQLLIGRIWRLVDEIGAYFRWS) are cytoplasmic. A helical membrane pass occupies residues 262 to 282 (MTLLFLYNGLTILHVVNWAII). The Extracellular segment spans residues 283 to 296 (RSIDPNDCCQLNRL). A helical membrane pass occupies residues 297-317 (GSITFLSFNLLLTCFFSECCV). Topologically, residues 318 to 367 (KTYNSISYILHQIGCLPTAEEFQMLKMGLKEYILQMQHLKLLFTCGGLFD) are cytoplasmic. A helical transmembrane segment spans residues 368-388 (INIKLFGGMLVTLCGYVIIIV). The Extracellular segment spans residues 389–408 (QFKIQDFALIGYRQNTSDTS). A glycan (N-linked (GlcNAc...) asparagine) is linked at N403.

This sequence belongs to the insect chemoreceptor superfamily. Gustatory receptor (GR) family. Gr2a subfamily.

Its subcellular location is the cell membrane. Its function is as follows. Probable gustatory receptor which mediates acceptance or avoidance behavior, depending on its substrates. In Drosophila melanogaster (Fruit fly), this protein is Putative gustatory receptor 98c (Gr98c).